The chain runs to 476 residues: Chromosomal replication initiator protein DnaA (476 aa).

Residues 1-75 are domain I, interacts with DnaA modulators; sequence MLAPDTFWLA…TQMAENHFAR (75 aa). The segment at 75-139 is domain II; it reads RPVQLQLELA…AKEKQEKNPT (65 aa). The segment at 110–141 is disordered; that stretch reads FDAPTESAQKAPKDTKDTKDAKEKQEKNPTRL. Over residues 120–138 the composition is skewed to basic and acidic residues; the sequence is APKDTKDTKDAKEKQEKNP. The interval 140–356 is domain III, AAA+ region; that stretch reads RLNPSFTFNT…GALKRVVAYS (217 aa). Residues Gly184, Gly186, Lys187, and Thr188 each coordinate ATP. A domain IV, binds dsDNA region spans residues 357 to 476; the sequence is RFTGHALTLD…FNTLLHILRG (120 aa).

This sequence belongs to the DnaA family. Oligomerizes as a right-handed, spiral filament on DNA at oriC.

Its subcellular location is the cytoplasm. Its function is as follows. Plays an essential role in the initiation and regulation of chromosomal replication. ATP-DnaA binds to the origin of replication (oriC) to initiate formation of the DNA replication initiation complex once per cell cycle. Binds the DnaA box (a 9 base pair repeat at the origin) and separates the double-stranded (ds)DNA. Forms a right-handed helical filament on oriC DNA; dsDNA binds to the exterior of the filament while single-stranded (ss)DNA is stabiized in the filament's interior. The ATP-DnaA-oriC complex binds and stabilizes one strand of the AT-rich DNA unwinding element (DUE), permitting loading of DNA polymerase. After initiation quickly degrades to an ADP-DnaA complex that is not apt for DNA replication. Binds acidic phospholipids. The chain is Chromosomal replication initiator protein DnaA from Nitrosospira multiformis (strain ATCC 25196 / NCIMB 11849 / C 71).